A 388-amino-acid polypeptide reads, in one-letter code: MAAGISLTKPNIGVYTNPNHDLWVADAKPTLEEVKSGSDLKPGQVTVEIRSTGICGSDVHFWHAGCIGPMIVTGDHILGHESAGVVIAVAPDVKTLKPGDRVAIEPNIICNKCEPCLTGRYNGCEAVEFLSTPPVDGLLRRYVNHPAIWCHKIGDMSFEDGALLEPLSVALAGMDRAGVRLGDPVLVAGAGPIGLVTLLCVRAAGATPIVITDIDEGRLRFAKELVPEVRTYRVQTGLSAEENAAGILDALNDGNGSAPDAIRPRVAMECTGVESSVASAIWSVKFGGKVFVIGVGKNEMKVPFMRLSTWEIDLQYQYRYCNTWPKAIRLVKNGVINLKKLVTHRFPLEDAVKAFETAANPKTGAIKVQIMSSEEDIKAASGVNGASN.

Positions 55, 80, 81, 110, 113, 116, 124, and 165 each coordinate Zn(2+). NAD(+)-binding positions include 192–193 (PI), aspartate 213, arginine 218, isoleucine 293, and 317–319 (QYR).

The protein belongs to the zinc-containing alcohol dehydrogenase family. In terms of assembly, homotetramer. Zn(2+) serves as cofactor.

It catalyses the reaction L-arabinitol + NAD(+) = L-xylulose + NADH + H(+). It participates in carbohydrate degradation; L-arabinose degradation via L-arabinitol; D-xylulose 5-phosphate from L-arabinose (fungal route): step 2/5. Catalyzes the NAD-dependent oxidation of L-arabinitol to L-xylulose in the fungal L-arabinose catabolic pathway. L-arabinose catabolism is important for using plant material as a carbon source. NADP cannot act as a cosubstrate. The chain is L-arabinitol 4-dehydrogenase (lad) from Talaromyces emersonii (Thermophilic fungus).